Here is an 88-residue protein sequence, read N- to C-terminus: MANSLRGEVLNLYKNLLYLGRDYPKGADYFKRRLKNVFLKNKDVKDPEKIKELIERGKFVMKELEALYFLRKYRAMKQRYYSDTNKTK.

This sequence belongs to the complex I LYR family. Homotetramer. Interacts with NDUFAB1. Interacts with ETFA. Interacts with ETFB.

It localises to the mitochondrion. Its function is as follows. Acts as a regulator of the electron transfer flavoprotein by promoting the removal of flavin from the ETF holoenzyme (composed of ETFA and ETFB). In Bos taurus (Bovine), this protein is Electron transfer flavoprotein regulatory factor 1.